The sequence spans 367 residues: Glutamate 5-kinase (367 aa).

K10 lines the ATP pocket. 3 residues coordinate substrate: S50, D137, and N149. ATP contacts are provided by residues 169–170 (TD) and 211–217 (TGGMSTK). Positions 275 to 353 (AGEITVDDGA…QQIAEILGYE (79 aa)) constitute a PUA domain.

This sequence belongs to the glutamate 5-kinase family.

It is found in the cytoplasm. The catalysed reaction is L-glutamate + ATP = L-glutamyl 5-phosphate + ADP. It functions in the pathway amino-acid biosynthesis; L-proline biosynthesis; L-glutamate 5-semialdehyde from L-glutamate: step 1/2. Functionally, catalyzes the transfer of a phosphate group to glutamate to form L-glutamate 5-phosphate. The polypeptide is Glutamate 5-kinase (Pectobacterium atrosepticum (strain SCRI 1043 / ATCC BAA-672) (Erwinia carotovora subsp. atroseptica)).